Consider the following 123-residue polypeptide: DNA-directed RNA polymerase I subunit RPA12 (123 aa).

Zn(2+) is bound by residues Cys17, Cys20, Cys35, Cys38, Cys84, and Cys87. The segment at Cys17 to Cys38 adopts a C4-type zinc-finger fold. The segment at Val80 to Lys120 adopts a TFIIS-type zinc-finger fold. The Hairpin motif lies at Asp103–Glu104. Cys112 and Cys115 together coordinate Zn(2+).

It belongs to the archaeal RpoM/eukaryotic RPA12/RPB9/RPC11 RNA polymerase family. As to quaternary structure, component of the RNA polymerase I (Pol I) complex consisting of 13 subunits: a ten-subunit catalytic core composed of POLR1A/RPA1, POLR1B/RPA2, POLR1C/RPAC1, POLR1D/RPAC2, POLR1H/RPA12, POLR2E/RPABC1, POLR2F/RPABC2, POLR2H/RPABC3, POLR2K/RPABC4 and POLR2L/RPABC5; a mobile stalk subunit POLR1F/RPA43 protruding from the core and additional subunits homologous to general transcription factors POLR1E/RPA49 and POLR1G/RPA34. Part of Pol I pre-initiation complex (PIC), in which Pol I core assembles with RRN3 and promoter-bound UTBF and SL1/TIF-IB complex.

Its subcellular location is the nucleus. It localises to the nucleolus. In terms of biological role, core component of RNA polymerase I (Pol I), a DNA-dependent RNA polymerase which synthesizes ribosomal RNA precursors using the four ribonucleoside triphosphates as substrates. Can mediate Pol I proofreading of the nascent RNA transcript. Anchors into the Pol I active site to monitor transcription fidelity and cleave mis-incorporated 5'-ribonucleotides. The sequence is that of DNA-directed RNA polymerase I subunit RPA12 from Rattus norvegicus (Rat).